Here is a 78-residue protein sequence, read N- to C-terminus: Calcium/calmodulin-dependent protein kinase II inhibitor 1 (78 aa).

The CAMK2 inhibitory domain stretch occupies residues 41–68 (SKRPPKLGQIGRSKRVVIEDDRIDDVLK).

It belongs to the CAMK2N family. As to quaternary structure, interacts with CAMK2B; the presence of Ca(2+)/calmodulin increases the interaction but is not essential. Interacts with CAMK2A; this interaction requires CAMK2A activation by Ca(2+). In terms of tissue distribution, expressed in the brain (at protein level). Expressed in cardiomyocytes but not cardiac fibroblasts (at protein level).

Its subcellular location is the synapse. The protein resides in the cell projection. It is found in the dendrite. It localises to the postsynaptic density. In terms of biological role, potent and specific inhibitor of CaM-kinase II (CAMK2). Plays a role in the maintenance of long-term retrieval-induced memory in response to contextual fear. Modulates blood pressure and vascular reactivity via regulation of CAMK2 activity in addition to regulation of left ventricular mass. Mediates the NLRP3 inflammasome in cardiomyocytes via acting as an inhibitor of the MAPK14/p38 and MAPK8/JNK pathways, thereby regulating ventricular remodeling and cardiac rhythm post-myocardial infarction. Negatively effects insulin sensitivity and promotes lipid formation in adipose tissues independent of CAMK2 signaling. The polypeptide is Calcium/calmodulin-dependent protein kinase II inhibitor 1 (Camk2n1) (Mus musculus (Mouse)).